The sequence spans 367 residues: Histidinol-phosphate aminotransferase (367 aa).

Residue K225 is modified to N6-(pyridoxal phosphate)lysine.

The protein belongs to the class-II pyridoxal-phosphate-dependent aminotransferase family. Histidinol-phosphate aminotransferase subfamily. In terms of assembly, homodimer. Pyridoxal 5'-phosphate serves as cofactor.

The enzyme catalyses L-histidinol phosphate + 2-oxoglutarate = 3-(imidazol-4-yl)-2-oxopropyl phosphate + L-glutamate. Its pathway is amino-acid biosynthesis; L-histidine biosynthesis; L-histidine from 5-phospho-alpha-D-ribose 1-diphosphate: step 7/9. The protein is Histidinol-phosphate aminotransferase of Hyphomonas neptunium (strain ATCC 15444).